The sequence spans 528 residues: Peptide chain release factor 3 (528 aa).

The region spanning 10-278 is the tr-type G domain; that stretch reads DRRRTFGIIS…AFVQMAPPPH (269 aa). GTP-binding positions include 19 to 26, 87 to 91, and 141 to 144; these read SHPDAGKT, DTPGH, and NKLD.

The protein belongs to the TRAFAC class translation factor GTPase superfamily. Classic translation factor GTPase family. PrfC subfamily.

It localises to the cytoplasm. Increases the formation of ribosomal termination complexes and stimulates activities of RF-1 and RF-2. It binds guanine nucleotides and has strong preference for UGA stop codons. It may interact directly with the ribosome. The stimulation of RF-1 and RF-2 is significantly reduced by GTP and GDP, but not by GMP. This is Peptide chain release factor 3 from Syntrophobacter fumaroxidans (strain DSM 10017 / MPOB).